A 1218-amino-acid polypeptide reads, in one-letter code: NACHT, LRR and PYD domains-containing protein 1 allele 2 (1218 aa).

The disordered stretch occupies residues 1 to 61 (MEESQSKQES…SLPGWSSTSK (61 aa)). The segment covering 7–29 (KQESNTRVAQHGSQQDVDPTFQT) has biased composition (polar residues). Residues 175-484 (QLVIIEGAAG…EFFAAMSYIL (310 aa)) form the NACHT domain. 181–188 (GAAGIGKS) lines the ATP pocket. LRR repeat units lie at residues 343-364 (KERNTIIDFNLIGSIPVLLTLC), 673-693 (NLEELDLSGNPLSYSAVRSLC), and 730-750 (RLAELDLRLNDLGDNGVRQLC). Positions 799-815 (TMPTENTDGEESLTSSK) are enriched in polar residues. The interval 799 to 842 (TMPTENTDGEESLTSSKQQQQQSGDKHMEPLGTDDDFWGPSGPV) is disordered. The tract at residues 835 to 968 (FWGPSGPVST…HFAVLENPSF (134 aa)) is ZU5. An FIIND domain is found at 835 to 1118 (FWGPSGPVST…LRPALPRMAS (284 aa)). The tract at residues 969–1118 (SPMGVLLRMI…LRPALPRMAS (150 aa)) is UPA. Residues 1122 to 1211 (DAPALLHFVD…HLIMDLLEKS (90 aa)) enclose the CARD domain.

The protein belongs to the NLRP family. As to quaternary structure, interacts (via LRR repeats) with BCL2 and BCL2L1 (via the loop between motifs BH4 and BH3). Interacts with NOD2; this interaction is enhanced in the presence of muramyl dipeptide (MDP) and increases IL1B release. Interacts with EIF2AK2/PKR; this interaction requires EIF2AK2 activity, is accompanied by EIF2AK2 autophosphorylation and promotes inflammasome assembly in response to danger-associated signals. Interacts with MEFV; this interaction targets Nlrp1a to degradation by autophagy, hence preventing excessive IL1B- and IL18-mediated inflammation. Interacts with DPP9; leading to inhibit activation of the inflammasome. DPP9 acts via formation of a ternary complex, composed of a DPP9 homodimer, one full-length NLRP1 protein, and one cleaved C-terminus of Nlrp1a (NACHT, LRR and PYD domains-containing protein 1a, C-terminus). Interacts with DPP8; leading to inhibit activation of the inflammasome, probably via formation of a ternary complex with DPP8. Interacts with the C-terminal part of Nlrp1a (NACHT, LRR and PYD domains-containing protein 1a, C-terminus) in absence of pathogens and other damage-associated signals. In terms of assembly, interacts with the N-terminal part of Nlrp1a (NACHT, LRR and PYD domains-containing protein 1a, N-terminus) in absence of pathogens and other damage-associated signals. Homomultimer; forms the Nlrp1a inflammasome polymeric complex, a filament composed of homopolymers of this form in response to pathogens and other damage-associated signals. The Nlrp1a inflammasome polymeric complex directly recruits pro-caspase-1 (proCASP1) independently of PYCARD/ASC. Interacts (via CARD domain) with CASP1 (via CARD domain); leading to CASP1 activation. Autocatalytically cleaved. Autocatalytic cleavage in FIIND region occurs constitutively, prior to activation signals, and is required for inflammasome activity (IL1B release), possibly by facilitating CASP1 binding. Both N- and C-terminal parts remain associated non-covalently. Post-translationally, (Microbial infection) Cleavage by B.anthracis lethal toxin (LT) endopeptidase promotes ubiquitination and degradation of the N-terminal part, releasing the cleaved C-terminal part of the protein (NACHT, LRR and PYD domains-containing protein 1a, C-terminus), which polymerizes and forms the Nlrp1a inflammasome. In terms of processing, ubiquitinated in response to pathogen-associated signals, leading to its degradation by the proteasome and subsequent release of the cleaved C-terminal part of the protein (NACHT, LRR and PYD domains-containing protein 1a, C-terminus), which polymerizes and forms the Nlrp1a inflammasome.

The protein localises to the cytoplasm. It localises to the cytosol. It is found in the nucleus. Its subcellular location is the inflammasome. With respect to regulation, activated by cleavage by B.anthracis lethal toxin (LT) endopeptidase. Cleavage by LT promotes ubiquitination and degradation of the N-terminal part, releasing the cleaved C-terminal part of the protein (NACHT, LRR and PYD domains-containing protein 1a, C-terminus), which polymerizes and forms the Nlrp1a inflammasome. Nlrp1a inflammasome is inhibited by DPP8 and DPP9, which sequester the C-terminal fragment of Nlrp1a (NACHT, LRR and PYD domains-containing protein 1a, C-terminus) in a ternary complex, thereby preventing Nlrp1a oligomerization and activation. Nlrp1a inflammasome is weakly activated by Val-boroPro (Talabostat, PT-100), an inhibitor of dipeptidyl peptidases DPP8 and DPP9. Val-boroPro relieves inhibition of DPP8 and/or DPP9 by promoting disruption of the ternary complex, releasing its C-terminal part from autoinhibition. Weakly activated by Toxoplasma gondii. Its function is as follows. Acts as the sensor component of the Nlrp1a inflammasome, which mediates inflammasome activation in response to various pathogen-associated signals, leading to subsequent pyroptosis. Inflammasomes are supramolecular complexes that assemble in the cytosol in response to pathogens and other damage-associated signals and play critical roles in innate immunity and inflammation. Acts as a recognition receptor (PRR): recognizes specific pathogens and other damage-associated signals, such as B.anthracis lethal toxin (LT) or Val-boroPro inhibitor, and mediates the formation of the inflammasome polymeric complex. In response to pathogen-associated signals, the N-terminal part of Nlrp1a is degraded by the proteasome, releasing the cleaved C-terminal part of the protein (NACHT, LRR and PYD domains-containing protein 1a, C-terminus), which polymerizes to initiate the formation of the inflammasome complex: the inflammasome directly recruits pro-caspase-1 (proCASP1) independently of PYCARD/ASC and promotes caspase-1 (CASP1) activation, which subsequently cleaves and activates inflammatory cytokines IL1B and IL18 and gasdermin-D (GSDMD), leading to pyroptosis. In the absence of GSDMD expression, the Nlrp1a inflammasome is able to recruit and activate CASP8, leading to activation of gasdermin-E (GSDME). Constitutes the precursor of the Nlrp1a inflammasome, which mediates autoproteolytic processing within the FIIND domain to generate the N-terminal and C-terminal parts, which are associated non-covalently in absence of pathogens and other damage-associated signals. In terms of biological role, regulatory part that prevents formation of the Nlrp1a inflammasome: in absence of pathogens and other damage-associated signals, interacts with the C-terminal part of Nlrp1a (NACHT, LRR and PYD domains-containing protein 1a, C-terminus), preventing activation of the Nlrp1a inflammasome. In response to pathogen-associated signals, this part is ubiquitinated by the N-end rule pathway and degraded by the proteasome, releasing the cleaved C-terminal part of the protein, which polymerizes and forms the Nlrp1a inflammasome. Functionally, constitutes the active part of the Nlrp1a inflammasome. In absence of pathogens and other damage-associated signals, interacts with the N-terminal part of Nlrp1a (NACHT, LRR and PYD domains-containing protein 1a, N-terminus), preventing activation of the Nlrp1a inflammasome. In response to pathogen-associated signals, the N-terminal part of Nlrp1a is degraded by the proteasome, releasing this form, which polymerizes to form the Nlrp1a inflammasome complex: the Nlrp1a inflammasome complex then directly recruits pro-caspase-1 (proCASP1) and promotes caspase-1 (CASP1) activation, leading to gasdermin-D (GSDMD) cleavage and subsequent pyroptosis. The polypeptide is NACHT, LRR and PYD domains-containing protein 1 allele 2 (Rattus norvegicus (Rat)).